Here is a 366-residue protein sequence, read N- to C-terminus: Photosynthetic reaction center cytochrome c subunit (366 aa).

The first 22 residues, 1-22 (MALAVRISTLTVAVTAAALLAG), serve as a signal peptide directing secretion. Residue cysteine 23 is the site of N-palmitoyl cysteine attachment. Cysteine 23 carries S-diacylglycerol cysteine lipidation. Residues methionine 94, cysteine 107, cysteine 110, histidine 111, methionine 129, histidine 143, cysteine 151, cysteine 154, histidine 155, methionine 238, cysteine 249, cysteine 252, histidine 253, cysteine 309, cysteine 312, and histidine 313 each coordinate heme.

As to quaternary structure, component of the photosynthetic reaction center composed of protein subunits L (PufL), M (PufM), H (PuhA) and cytochrome C (PufC). The reaction center interacts with light-harvesting antenna complex LH1. In terms of processing, binds 4 heme groups per subunit.

The protein localises to the cellular chromatophore membrane. Its function is as follows. The reaction center of purple bacteria contains a tightly bound cytochrome molecule which re-reduces the photo oxidized primary electron donor. The polypeptide is Photosynthetic reaction center cytochrome c subunit (pufC) (Rubrivivax gelatinosus (strain NBRC 100245 / IL144)).